Here is a 273-residue protein sequence, read N- to C-terminus: SUMO-1 cysteine protease S273R (273 aa).

Residues histidine 168 and asparagine 187 contribute to the active site. Glutamine 226 contacts substrate. Catalysis depends on cysteine 232, which acts as the Nucleophile.

It belongs to the peptidase C63 family.

Its subcellular location is the host cytoplasm. The protein localises to the virion. In terms of biological role, cysteine protease that plays several role during infection including processing of the structural polyprotein or inhibition of the host immune response. Catalyzes the maturation of the pp220 and pp62 polyprotein precursors into core-shell proteins. Plays a role in the disruption of host pyroptosis via specific cleavage of gasdermin D/GSDMD. In addition, strongly decreases the host cGAS-STING signaling by targeting IKBKE via its enzymatic activity. Also impairs host FOXJ1-mediated antiviral effect via degradation of FOXJ1. The sequence is that of SUMO-1 cysteine protease S273R from Ornithodoros (relapsing fever ticks).